Here is a 241-residue protein sequence, read N- to C-terminus: Acetoacetyl-CoA reductase (241 aa).

NADP(+) is bound by residues 12 to 14 (RGI) and 82 to 86 (NAGIT). Substrate is bound by residues Asp-88 and 141-144 (QMGQ). Tyr-147 (proton acceptor) is an active-site residue. NADP(+) is bound at residue 177-180 (PGYI). 178 to 179 (GY) is a substrate binding site.

Belongs to the short-chain dehydrogenases/reductases (SDR) family.

The protein resides in the cytoplasm. It carries out the reaction a (3R)-3-hydroxyacyl-CoA + NADP(+) = a 3-oxoacyl-CoA + NADPH + H(+). Its pathway is biopolymer metabolism; poly-(R)-3-hydroxybutanoate biosynthesis. This chain is Acetoacetyl-CoA reductase, found in Shinella zoogloeoides (Crabtreella saccharophila).